A 224-amino-acid chain; its full sequence is 2-phospho-L-lactate guanylyltransferase (224 aa).

This sequence belongs to the CofC family. In terms of assembly, homodimer.

It carries out the reaction (2S)-2-phospholactate + GTP + H(+) = (2S)-lactyl-2-diphospho-5'-guanosine + diphosphate. The protein operates within cofactor biosynthesis; coenzyme F420 biosynthesis. Its function is as follows. Guanylyltransferase that catalyzes the activation of (2S)-2-phospholactate (2-PL) as (2S)-lactyl-2-diphospho-5'-guanosine, via the condensation of 2-PL with GTP. It is involved in the biosynthesis of coenzyme F420, a hydride carrier cofactor. The polypeptide is 2-phospho-L-lactate guanylyltransferase (Methanobrevibacter smithii (strain ATCC 35061 / DSM 861 / OCM 144 / PS)).